A 1203-amino-acid chain; its full sequence is ATP-dependent helicase/nuclease subunit A (1203 aa).

One can recognise a UvrD-like helicase ATP-binding domain in the interval 4–472 (VKLTPEQNEA…IRLKENFRSR (469 aa)). Position 25-32 (25-32 (ASAGSGKT)) interacts with ATP. The UvrD-like helicase C-terminal domain maps to 503-785 (VQGNITDYPV…RVMTFHKSKG (283 aa)).

This sequence belongs to the helicase family. AddA subfamily. As to quaternary structure, heterodimer of AddA and AddB/RexB. Mg(2+) serves as cofactor.

It catalyses the reaction Couples ATP hydrolysis with the unwinding of duplex DNA by translocating in the 3'-5' direction.. The catalysed reaction is ATP + H2O = ADP + phosphate + H(+). In terms of biological role, the heterodimer acts as both an ATP-dependent DNA helicase and an ATP-dependent, dual-direction single-stranded exonuclease. Recognizes the chi site generating a DNA molecule suitable for the initiation of homologous recombination. The AddA nuclease domain is required for chi fragment generation; this subunit has the helicase and 3' -&gt; 5' nuclease activities. The chain is ATP-dependent helicase/nuclease subunit A from Lactococcus lactis subsp. lactis (strain IL1403) (Streptococcus lactis).